The following is a 1342-amino-acid chain: DNA-directed RNA polymerase subunit beta (1342 aa).

It belongs to the RNA polymerase beta chain family. As to quaternary structure, the RNAP catalytic core consists of 2 alpha, 1 beta, 1 beta' and 1 omega subunit. When a sigma factor is associated with the core the holoenzyme is formed, which can initiate transcription.

It catalyses the reaction RNA(n) + a ribonucleoside 5'-triphosphate = RNA(n+1) + diphosphate. DNA-dependent RNA polymerase catalyzes the transcription of DNA into RNA using the four ribonucleoside triphosphates as substrates. This chain is DNA-directed RNA polymerase subunit beta, found in Proteus mirabilis (strain HI4320).